Reading from the N-terminus, the 238-residue chain is MSKQRPYVKFKQFQEQTGIFFRNEKLLIQAFTHSSYVNEHRKRLHEDNERLEFLGDAVLELTVSQYLFEQFPQMSEGELTKMRAAIVCEPSLVTFAHALSFGDLVLLGKGEELTGGRMRPSLLADVFEAFIGALYLDQGIEAVVQFLGKTIFPKIREGAFSHVMDYKSQLQEFVQRDGSGVLEYKILQERGPAHNKEFVSRVSLNGEELGVGVGRSKKEAEQRAAQMALAKLKQLQQG.

Residues 10–139 (FKQFQEQTGI…FIGALYLDQG (130 aa)) enclose the RNase III domain. Glutamate 52 contacts Mg(2+). Aspartate 56 is an active-site residue. Mg(2+)-binding residues include aspartate 125 and glutamate 128. Glutamate 128 is a catalytic residue. The region spanning 165-234 (DYKSQLQEFV…AQMALAKLKQ (70 aa)) is the DRBM domain.

This sequence belongs to the ribonuclease III family. Homodimer. Mg(2+) serves as cofactor.

It is found in the cytoplasm. It carries out the reaction Endonucleolytic cleavage to 5'-phosphomonoester.. Its function is as follows. Digests double-stranded RNA. Involved in the processing of primary rRNA transcript to yield the immediate precursors to the large and small rRNAs (23S and 16S). Processes some mRNAs, and tRNAs when they are encoded in the rRNA operon. Processes pre-crRNA and tracrRNA of type II CRISPR loci if present in the organism. The polypeptide is Ribonuclease 3 (Anoxybacillus flavithermus (strain DSM 21510 / WK1)).